The primary structure comprises 660 residues: Peroxisomal acyl-coenzyme A oxidase 1 (660 aa).

Phosphoserine is present on serine 26. 2 positions are modified to N6-succinyllysine: lysine 89 and lysine 90. FAD is bound by residues threonine 139 and glycine 178. Lysine 216 bears the N6-acetyllysine mark. Position 241 is an N6-succinyllysine (lysine 241). N6-acetyllysine occurs at positions 255, 267, and 272. At lysine 349 the chain carries N6-succinyllysine. Glutamate 421 functions as the Proton acceptor in the catalytic mechanism. N6-acetyllysine; alternate is present on residues lysine 437 and lysine 446. N6-succinyllysine; alternate is present on residues lysine 437 and lysine 446. Lysine 500 carries the N6-acetyllysine modification. An N6-acetyllysine; alternate modification is found at lysine 512. At lysine 512 the chain carries N6-succinyllysine; alternate. The residue at position 542 (lysine 542) is an N6-succinyllysine. N6-acetyllysine; alternate is present on lysine 637. At lysine 637 the chain carries N6-succinyllysine; alternate. Lysine 643 carries the post-translational modification N6-succinyllysine. Serine 649 carries the phosphoserine modification. At lysine 651 the chain carries N6-acetyllysine. An N6-succinyllysine modification is found at lysine 654. The Microbody targeting signal motif lies at 658-660; sequence SKL.

Belongs to the acyl-CoA oxidase family. In terms of assembly, homodimer. Interacts with LONP2. It depends on FAD as a cofactor.

The protein resides in the peroxisome. The catalysed reaction is a 2,3-saturated acyl-CoA + O2 = a (2E)-enoyl-CoA + H2O2. It catalyses the reaction hexadecanoyl-CoA + O2 = (2E)-hexadecenoyl-CoA + H2O2. It carries out the reaction dodecanoyl-CoA + O2 = (2E)-dodecenoyl-CoA + H2O2. The enzyme catalyses octanoyl-CoA + O2 = (2E)-octenoyl-CoA + H2O2. The catalysed reaction is decanoyl-CoA + O2 = (2E)-decenoyl-CoA + H2O2. It catalyses the reaction tetradecanoyl-CoA + O2 = (2E)-tetradecenoyl-CoA + H2O2. It carries out the reaction hexadecanedioyl-CoA + O2 = (2E)-hexadecenedioyl-CoA + H2O2. The enzyme catalyses tetracosanoyl-CoA + O2 = (2E)-tetracosenoyl-CoA + H2O2. The catalysed reaction is glutaryl-CoA + O2 = (2E)-glutaconyl-CoA + H2O2. It catalyses the reaction hexanoyl-CoA + O2 = (2E)-hexenoyl-CoA + H2O2. It carries out the reaction octadecanoyl-CoA + O2 = (2E)-octadecenoyl-CoA + H2O2. The enzyme catalyses (5Z,8Z,11Z,14Z,17Z)-eicosapentaenoyl-CoA + O2 = (2E,5Z,8Z,11Z,14Z,17Z)-icosahexaenoyl-CoA + H2O2. The catalysed reaction is (6Z,9Z,12Z,15Z,18Z,21Z)-tetracosahexaenoyl-CoA + O2 = (2E,6Z,9Z,12Z,15Z,18Z,21Z)-tetracosaheptaenoyl-CoA + H2O2. The protein operates within lipid metabolism; peroxisomal fatty acid beta-oxidation. Its function is as follows. Involved in the initial and rate-limiting step of peroxisomal beta-oxidation of straight-chain saturated and unsaturated very-long-chain fatty acids. Catalyzes the desaturation of fatty acyl-CoAs such as palmitoyl-CoA (hexadecanoyl-CoA) to 2-trans-enoyl-CoAs ((2E)-enoyl-CoAs) such as (2E)-hexadecenoyl-CoA, and donates electrons directly to molecular oxygen (O(2)), thereby producing hydrogen peroxide (H(2)O(2)). Shows highest activity against medium-chain fatty acyl-CoAs. Shows optimum activity with a chain length of 10 carbons (decanoyl-CoA) in vitro. Functionally, is active against a much broader range of substrates and shows activity towards long-chain acyl-CoAs. This chain is Peroxisomal acyl-coenzyme A oxidase 1, found in Pongo abelii (Sumatran orangutan).